Reading from the N-terminus, the 221-residue chain is Adenylate kinase (221 aa).

10–15 (GAGKGT) is a binding site for ATP. An NMP region spans residues 30-59 (STGDMLRAAVKAGTPLGLEAKRFMDAGELV). Residues T31, R36, 57–59 (ELV), 85–88 (GFPR), and Q92 contribute to the AMP site. Positions 122–159 (GRRSHAASGRTYHVKFNPPKVEGLDDVTGEPLIQRDDD) are LID. ATP-binding positions include R123 and 132–133 (TY). AMP-binding residues include R156 and R167. Residue G207 coordinates ATP.

It belongs to the adenylate kinase family. Monomer.

The protein resides in the cytoplasm. The enzyme catalyses AMP + ATP = 2 ADP. It functions in the pathway purine metabolism; AMP biosynthesis via salvage pathway; AMP from ADP: step 1/1. In terms of biological role, catalyzes the reversible transfer of the terminal phosphate group between ATP and AMP. Plays an important role in cellular energy homeostasis and in adenine nucleotide metabolism. This chain is Adenylate kinase, found in Paraburkholderia xenovorans (strain LB400).